The sequence spans 77 residues: MAGRKGGRAKRRKVCFFTSNGITRIDYKDVDLLKRFVSERGKILPRRVTGTSAKYQRKLTVAIKRARQMALLPYVGE.

The protein belongs to the bacterial ribosomal protein bS18 family. Part of the 30S ribosomal subunit. Forms a tight heterodimer with protein bS6.

Binds as a heterodimer with protein bS6 to the central domain of the 16S rRNA, where it helps stabilize the platform of the 30S subunit. The polypeptide is Small ribosomal subunit protein bS18 (Bacillus thuringiensis subsp. konkukian (strain 97-27)).